The chain runs to 270 residues: Sugar phosphatase YidA (270 aa).

The active-site Nucleophile is aspartate 9. Aspartate 9 contributes to the Mg(2+) binding site. Phosphate is bound at residue methionine 10. A Mg(2+)-binding site is contributed by aspartate 11. Phosphate is bound by residues 43-44 (TG) and lysine 197. Aspartate 220 is a binding site for Mg(2+). Asparagine 223 is a phosphate binding site.

This sequence belongs to the HAD-like hydrolase superfamily. Cof family. In terms of assembly, homodimer. Mg(2+) is required as a cofactor.

The catalysed reaction is sugar phosphate + H2O = sugar + phosphate.. Catalyzes the dephosphorylation of different sugar phosphates. This is Sugar phosphatase YidA (yidA) from Escherichia coli O6:H1 (strain CFT073 / ATCC 700928 / UPEC).